The chain runs to 72 residues: Conotoxin VnMKLT2-021 (72 aa).

A signal peptide spans M1–A22. A propeptide spanning residues A23–T45 is cleaved from the precursor. A disordered region spans residues Y25–L44. 3 disulfide bridges follow: C48–C62, C55–C66, and C61–C71.

It belongs to the conotoxin O1 superfamily. In terms of tissue distribution, expressed by the venom duct.

Its subcellular location is the secreted. This is Conotoxin VnMKLT2-021 from Conus ventricosus (Mediterranean cone).